Reading from the N-terminus, the 569-residue chain is Laccase-14 (569 aa).

An N-terminal signal peptide occupies residues 1–33 (MEFKLNIPNTIIKTLQTIVFFLFVLLAFQIAEA). 2 Plastocyanin-like domains span residues 41-157 (KIKS…PKRG) and 167-320 (REIP…YKGD). N-linked (GlcNAc...) asparagine glycosylation is present at Asn-87. Cu cation is bound by residues His-91, His-93, His-136, and His-138. N-linked (GlcNAc...) asparagine glycans are attached at residues Asn-190, Asn-249, Asn-336, Asn-374, Asn-395, Asn-430, and Asn-452. Residues 420–553 (DFPRNPPTKF…NTVFIVKDGP (134 aa)) enclose the Plastocyanin-like 3 domain. His-470, His-473, His-475, His-532, Cys-533, His-534, His-538, and Met-543 together coordinate Cu cation.

The protein belongs to the multicopper oxidase family. The cofactor is Cu cation. In terms of tissue distribution, expressed at low levels in flowers and siliques.

Its subcellular location is the secreted. It is found in the extracellular space. The protein localises to the apoplast. It carries out the reaction 4 hydroquinone + O2 = 4 benzosemiquinone + 2 H2O. Lignin degradation and detoxification of lignin-derived products. The protein is Laccase-14 (LAC14) of Arabidopsis thaliana (Mouse-ear cress).